The chain runs to 462 residues: MAAKSEAMDTLVSLAKRRGLVYPSSEIYGGLRASWDYGPLGVELKNNVKRQWWRAMVQEREDIVGLDSCVILAREVWEASGHVDAFVDPLTECQSCHKRFRADHLTEAYEAKHGKPPANGLADLNCPHCGAKGAFTEPRMFSGLLRTYVGPVQDESGLAFLRPETAQGIFINYKNVEQSSRRKIPFGIAQIGKSFRNEITPGNFIFRTREFEQMEVEFFVRPGTDEEWHQYWIDTRLQWYIDLGINKDNLRLYEHPKEKLSHYSKRTVDIEYRFNFAGSEWGELEGIANRTDYDLSTHSKRSGTDLSYFDQETNTRFIPYVIEPSAGVDRTMLTFLLDAYTEDEAPNAKGKMEKRVVMRLDPRLAPVKAAVLPLSRNADLSPKARDLAAKLRKRWNVEFDDAGAIGRRYRRQDEIGTPFCVTIDFDTLEDNAVTVRERDSMAQERISIDQVEQYLAERLAGC.

The substrate site is built by arginine 101 and glutamate 164. ATP contacts are provided by residues 196–198 (RNE), 206–211 (FRTREF), 283–284 (EL), and 327–330 (GVDR). Residue 211–215 (FEQME) coordinates substrate. Residue 323–327 (EPSAG) participates in substrate binding.

Belongs to the class-II aminoacyl-tRNA synthetase family. Homodimer.

It localises to the cytoplasm. It catalyses the reaction tRNA(Gly) + glycine + ATP = glycyl-tRNA(Gly) + AMP + diphosphate. Its function is as follows. Catalyzes the attachment of glycine to tRNA(Gly). The chain is Glycine--tRNA ligase from Thermobifida fusca (strain YX).